The sequence spans 240 residues: Glutamine amidotransferase-like protein chry6 (240 aa).

The Glutamine amidotransferase type-1 domain maps to 13-205 (NFILDDTGGR…FVASDNPVLV (193 aa)). The Nucleophile role is filled by Cys102. Catalysis depends on residues His185 and Glu187.

The protein belongs to the peptidase C26 family.

It functions in the pathway pigment biosynthesis. Functionally, glutamine amidotransferase-like protein; part of the gene cluster that mediates the biosynthesis of the yellow pigment chrysogine. Pyruvic acid and anthranilic acid are likely substrates for the nonribosomal peptide synthetase chry1/NRPS14, with pyruvic acid adenylated by the first A domain and anthranilic acid by the second. If pyruvic acid and anthranilic acid are merged and released from chry1/NRPS14 by hydrolysis, a subsequent amidation would lead to 2-pyruvoylaminobenzamide. This process is probably catalyzed by the amidotransferase chry2 using glutamine as amino donor. The dehydrogenase chry5 that has a terminal berberine bridge domain for C-N cyclization could catalyze the cyclization of 2-pyruvoylaminobenzamide to yield acetyl-4(3H)-quinazolidinone. A final reduction of acetyl-4(3H)-quinazolidinone catalyzed by the oxidoreductase chry4 would result in chrysogine. This chain is Glutamine amidotransferase-like protein chry6, found in Gibberella zeae (strain ATCC MYA-4620 / CBS 123657 / FGSC 9075 / NRRL 31084 / PH-1) (Wheat head blight fungus).